Consider the following 453-residue polypeptide: Bifunctional protein GlmU (453 aa).

The interval 1 to 225 is pyrophosphorylase; sequence MHAHVILAAG…AEEALGVNTR (225 aa). UDP-N-acetyl-alpha-D-glucosamine is bound by residues 7 to 10, Lys21, Gln72, and 77 to 78; these read LAAG and GT. Asp102 contacts Mg(2+). Residues Gly138, Glu152, Asn167, and Asn223 each contribute to the UDP-N-acetyl-alpha-D-glucosamine site. Asn223 lines the Mg(2+) pocket. Residues 226–246 are linker; it reads EELARVEGVLLRRLRAEWMGK. Residues 247 to 453 are N-acetyltransferase; sequence GVRMILPETI…GYALRKLGEG (207 aa). UDP-N-acetyl-alpha-D-glucosamine contacts are provided by Arg329 and Lys347. Residue His359 is the Proton acceptor of the active site. 2 residues coordinate UDP-N-acetyl-alpha-D-glucosamine: Tyr362 and Asn373. Acetyl-CoA is bound by residues Ala376, 382-383, Ser401, Ala419, and Arg436; that span reads NY.

It in the N-terminal section; belongs to the N-acetylglucosamine-1-phosphate uridyltransferase family. The protein in the C-terminal section; belongs to the transferase hexapeptide repeat family. In terms of assembly, homotrimer. Requires Mg(2+) as cofactor.

It is found in the cytoplasm. The enzyme catalyses alpha-D-glucosamine 1-phosphate + acetyl-CoA = N-acetyl-alpha-D-glucosamine 1-phosphate + CoA + H(+). It carries out the reaction N-acetyl-alpha-D-glucosamine 1-phosphate + UTP + H(+) = UDP-N-acetyl-alpha-D-glucosamine + diphosphate. Its pathway is nucleotide-sugar biosynthesis; UDP-N-acetyl-alpha-D-glucosamine biosynthesis; N-acetyl-alpha-D-glucosamine 1-phosphate from alpha-D-glucosamine 6-phosphate (route II): step 2/2. The protein operates within nucleotide-sugar biosynthesis; UDP-N-acetyl-alpha-D-glucosamine biosynthesis; UDP-N-acetyl-alpha-D-glucosamine from N-acetyl-alpha-D-glucosamine 1-phosphate: step 1/1. It functions in the pathway bacterial outer membrane biogenesis; LPS lipid A biosynthesis. In terms of biological role, catalyzes the last two sequential reactions in the de novo biosynthetic pathway for UDP-N-acetylglucosamine (UDP-GlcNAc). The C-terminal domain catalyzes the transfer of acetyl group from acetyl coenzyme A to glucosamine-1-phosphate (GlcN-1-P) to produce N-acetylglucosamine-1-phosphate (GlcNAc-1-P), which is converted into UDP-GlcNAc by the transfer of uridine 5-monophosphate (from uridine 5-triphosphate), a reaction catalyzed by the N-terminal domain. This chain is Bifunctional protein GlmU, found in Thermus thermophilus (strain ATCC BAA-163 / DSM 7039 / HB27).